The chain runs to 337 residues: Cytoskeleton protein RodZ (337 aa).

Topologically, residues 1-111 (MNTEATHDQN…LGKRRKKRDG (111 aa)) are cytoplasmic. The HTH cro/C1-type domain maps to 19–71 (LRNAREQLGLSQQAVAERLCLKVSTVRDIEEDKAPADLASTFLRGYIRSYARL). Residues 30–49 (QQAVAERLCLKVSTVRDIEE) constitute a DNA-binding region (H-T-H motif). The helical; Signal-anchor for type II membrane protein transmembrane segment at 112-132 (WLMTFTWLVLFVVIGLSGAWW) threads the bilayer. At 133–337 (WQDHKAQQEE…TLNAEQSPAQ (205 aa)) the chain is on the periplasmic side. Positions 145–167 (TMADQSSAELSSNSEQGQSVPLN) are enriched in polar residues. Residues 145-236 (TMADQSSAEL…TAATTPDGAA (92 aa)) are disordered. Residues 168-207 (TSTTTDPATTSTPPASVDTTATNTQTPVVTAPAPAVDPQQ) show a composition bias toward low complexity. Residues 208-218 (NAVVSPSQANV) show a composition bias toward polar residues. Residues 219–236 (DTAATPAPTAATTPDGAA) are compositionally biased toward low complexity.

It belongs to the RodZ family.

It localises to the cell inner membrane. In terms of biological role, cytoskeletal protein that is involved in cell-shape control through regulation of the length of the long axis. This is Cytoskeleton protein RodZ from Escherichia coli O157:H7.